Here is a 413-residue protein sequence, read N- to C-terminus: Serine hydroxymethyltransferase (413 aa).

Residues leucine 117 and 121 to 123 (GHL) contribute to the (6S)-5,6,7,8-tetrahydrofolate site. Lysine 226 is subject to N6-(pyridoxal phosphate)lysine. Residues glutamate 239 and 349–351 (SPF) each bind (6S)-5,6,7,8-tetrahydrofolate.

Belongs to the SHMT family. In terms of assembly, homodimer. It depends on pyridoxal 5'-phosphate as a cofactor.

Its subcellular location is the cytoplasm. It carries out the reaction (6R)-5,10-methylene-5,6,7,8-tetrahydrofolate + glycine + H2O = (6S)-5,6,7,8-tetrahydrofolate + L-serine. Its pathway is one-carbon metabolism; tetrahydrofolate interconversion. It participates in amino-acid biosynthesis; glycine biosynthesis; glycine from L-serine: step 1/1. Functionally, catalyzes the reversible interconversion of serine and glycine with tetrahydrofolate (THF) serving as the one-carbon carrier. This reaction serves as the major source of one-carbon groups required for the biosynthesis of purines, thymidylate, methionine, and other important biomolecules. Also exhibits THF-independent aldolase activity toward beta-hydroxyamino acids, producing glycine and aldehydes, via a retro-aldol mechanism. This is Serine hydroxymethyltransferase from Bacillus cereus (strain ATCC 10987 / NRS 248).